Reading from the N-terminus, the 178-residue chain is Large ribosomal subunit protein uL6 (178 aa).

This sequence belongs to the universal ribosomal protein uL6 family. In terms of assembly, part of the 50S ribosomal subunit.

Its function is as follows. This protein binds to the 23S rRNA, and is important in its secondary structure. It is located near the subunit interface in the base of the L7/L12 stalk, and near the tRNA binding site of the peptidyltransferase center. This is Large ribosomal subunit protein uL6 from Paenarthrobacter aurescens (strain TC1).